Reading from the N-terminus, the 172-residue chain is NADH-quinone oxidoreductase subunit B (172 aa).

[4Fe-4S] cluster-binding residues include Cys46, Cys47, Cys111, and Cys141.

Belongs to the complex I 20 kDa subunit family. NDH-1 is composed of 14 different subunits. Subunits NuoB, C, D, E, F, and G constitute the peripheral sector of the complex. It depends on [4Fe-4S] cluster as a cofactor.

It is found in the cell membrane. It catalyses the reaction a quinone + NADH + 5 H(+)(in) = a quinol + NAD(+) + 4 H(+)(out). NDH-1 shuttles electrons from NADH, via FMN and iron-sulfur (Fe-S) centers, to quinones in the respiratory chain. The immediate electron acceptor for the enzyme in this species is believed to be a menaquinone. Couples the redox reaction to proton translocation (for every two electrons transferred, four hydrogen ions are translocated across the cytoplasmic membrane), and thus conserves the redox energy in a proton gradient. The polypeptide is NADH-quinone oxidoreductase subunit B (Bacillus cytotoxicus (strain DSM 22905 / CIP 110041 / 391-98 / NVH 391-98)).